The following is a 218-amino-acid chain: N-(5'-phosphoribosyl)anthranilate isomerase (218 aa).

Belongs to the TrpF family.

The enzyme catalyses N-(5-phospho-beta-D-ribosyl)anthranilate = 1-(2-carboxyphenylamino)-1-deoxy-D-ribulose 5-phosphate. Its pathway is amino-acid biosynthesis; L-tryptophan biosynthesis; L-tryptophan from chorismate: step 3/5. This is N-(5'-phosphoribosyl)anthranilate isomerase from Bordetella bronchiseptica (strain ATCC BAA-588 / NCTC 13252 / RB50) (Alcaligenes bronchisepticus).